Reading from the N-terminus, the 873-residue chain is Sine oculis-binding protein homolog (873 aa).

The span at 1–14 (MAEMEKEGRPPENK) shows a compositional bias: basic and acidic residues. Positions 1-26 (MAEMEKEGRPPENKRSRKPAHPVKRE) are disordered. FCS-type zinc fingers lie at residues 142–180 (DDVS…KCFA) and 216–256 (FKNN…KCLN). Disordered stretches follow at residues 307 to 338 (ARRK…SDTA), 413 to 485 (RGPP…GAPL), 550 to 608 (KPPS…NQAQ), 742 to 766 (STEG…ELAV), and 779 to 811 (SNCH…NPAD). Positions 312–338 (PSPASAAGQIQGPGPSASTTASPSDTA) are enriched in low complexity. Residues 460 to 485 (IHPPTTPTMPGNPPGLLPPPPPGAPL) show a composition bias toward pro residues. Residues 554 to 570 (GFSSNGENFIPSNSSET) show a composition bias toward polar residues. Low complexity predominate over residues 571 to 603 (PGGKPPNSSSSPRESKQGSSKPSDSSPSCSGQS). Residues 783-793 (LEGDTGKKAGE) are compositionally biased toward basic and acidic residues.

It belongs to the SOBP family.

Its function is as follows. Implicated in development of the cochlea. This Gallus gallus (Chicken) protein is Sine oculis-binding protein homolog.